Reading from the N-terminus, the 426-residue chain is Serine hydroxymethyltransferase (426 aa).

Residues Leu-118 and 122–124 (GHL) contribute to the (6S)-5,6,7,8-tetrahydrofolate site. Lys-227 bears the N6-(pyridoxal phosphate)lysine mark. Residues 342–368 (NTIPNDPKPPTQASGIRLGTPAMTTRG) are disordered.

This sequence belongs to the SHMT family. In terms of assembly, homodimer. It depends on pyridoxal 5'-phosphate as a cofactor.

It localises to the cytoplasm. The enzyme catalyses (6R)-5,10-methylene-5,6,7,8-tetrahydrofolate + glycine + H2O = (6S)-5,6,7,8-tetrahydrofolate + L-serine. It functions in the pathway one-carbon metabolism; tetrahydrofolate interconversion. The protein operates within amino-acid biosynthesis; glycine biosynthesis; glycine from L-serine: step 1/1. In terms of biological role, catalyzes the reversible interconversion of serine and glycine with tetrahydrofolate (THF) serving as the one-carbon carrier. This reaction serves as the major source of one-carbon groups required for the biosynthesis of purines, thymidylate, methionine, and other important biomolecules. Also exhibits THF-independent aldolase activity toward beta-hydroxyamino acids, producing glycine and aldehydes, via a retro-aldol mechanism. The sequence is that of Serine hydroxymethyltransferase from Thermomicrobium roseum (strain ATCC 27502 / DSM 5159 / P-2).